A 224-amino-acid polypeptide reads, in one-letter code: Protein GrpE (224 aa).

The tract at residues 1–72 is disordered; sequence MEKERDVAQE…KAKEEQNEEL (72 aa). Over residues 10–19 the composition is skewed to polar residues; it reads EQATYEQESP. The segment covering 20–67 has biased composition (basic and acidic residues); the sequence is NAERQEELKENEHQEKNAPEEQEKVREENGRQDAQKDEIGDPEKAKEE.

Belongs to the GrpE family. Homodimer.

It is found in the cytoplasm. In terms of biological role, participates actively in the response to hyperosmotic and heat shock by preventing the aggregation of stress-denatured proteins, in association with DnaK and GrpE. It is the nucleotide exchange factor for DnaK and may function as a thermosensor. Unfolded proteins bind initially to DnaJ; upon interaction with the DnaJ-bound protein, DnaK hydrolyzes its bound ATP, resulting in the formation of a stable complex. GrpE releases ADP from DnaK; ATP binding to DnaK triggers the release of the substrate protein, thus completing the reaction cycle. Several rounds of ATP-dependent interactions between DnaJ, DnaK and GrpE are required for fully efficient folding. The chain is Protein GrpE from Parageobacillus thermoglucosidasius (Geobacillus thermoglucosidasius).